The primary structure comprises 343 residues: Phosphoribosylformylglycinamidine cyclo-ligase (343 aa).

The protein belongs to the AIR synthase family.

It localises to the cytoplasm. The enzyme catalyses 2-formamido-N(1)-(5-O-phospho-beta-D-ribosyl)acetamidine + ATP = 5-amino-1-(5-phospho-beta-D-ribosyl)imidazole + ADP + phosphate + H(+). The protein operates within purine metabolism; IMP biosynthesis via de novo pathway; 5-amino-1-(5-phospho-D-ribosyl)imidazole from N(2)-formyl-N(1)-(5-phospho-D-ribosyl)glycinamide: step 2/2. The protein is Phosphoribosylformylglycinamidine cyclo-ligase of Thermodesulfovibrio yellowstonii (strain ATCC 51303 / DSM 11347 / YP87).